A 411-amino-acid chain; its full sequence is LL-diaminopimelate aminotransferase (411 aa).

Substrate is bound by residues Tyr16 and Gly43. Pyridoxal 5'-phosphate contacts are provided by residues Tyr73, 109 to 110, Tyr133, Asn188, Tyr219, and 247 to 249; these read AK and SYS. Substrate-binding residues include Lys110, Tyr133, and Asn188. N6-(pyridoxal phosphate)lysine is present on Lys250. 2 residues coordinate pyridoxal 5'-phosphate: Arg258 and Asn293. Residues Asn293 and Arg389 each coordinate substrate.

This sequence belongs to the class-I pyridoxal-phosphate-dependent aminotransferase family. LL-diaminopimelate aminotransferase subfamily. Homodimer. Pyridoxal 5'-phosphate serves as cofactor.

It carries out the reaction (2S,6S)-2,6-diaminopimelate + 2-oxoglutarate = (S)-2,3,4,5-tetrahydrodipicolinate + L-glutamate + H2O + H(+). The protein operates within amino-acid biosynthesis; L-lysine biosynthesis via DAP pathway; LL-2,6-diaminopimelate from (S)-tetrahydrodipicolinate (aminotransferase route): step 1/1. In terms of biological role, involved in the synthesis of meso-diaminopimelate (m-DAP or DL-DAP), required for both lysine and peptidoglycan biosynthesis. Catalyzes the direct conversion of tetrahydrodipicolinate to LL-diaminopimelate. This Methanosphaera stadtmanae (strain ATCC 43021 / DSM 3091 / JCM 11832 / MCB-3) protein is LL-diaminopimelate aminotransferase.